Reading from the N-terminus, the 32-residue chain is uncharacterized protein (32 aa).

This is an uncharacterized protein from Saccharolobus islandicus (Sulfolobus islandicus).